Here is a 1019-residue protein sequence, read N- to C-terminus: Clotting factor C (1019 aa).

The N-terminal stretch at M1 to S25 is a signal peptide. The region spanning Y102 to E137 is the EGF-like domain. Cystine bridges form between C110-C118, C112-C125, C127-C136, C142-C182, C168-C195, C199-C241, C227-C254, C260-C308, C294-C321, C331-C350, C354-C374, C464-C564, C538-C556, C576-C621, C607-C634, and C720-C748. 3 consecutive Sushi domains span residues K140 to R197, E198 to K256, and V258 to K323. Positions A325–F421 constitute an LCCL domain. In terms of domain architecture, C-type lectin spans C436 to L568. N523 and N534 each carry an N-linked (GlcNAc...) asparagine glycan. 2 Sushi domains span residues A574–K636 and P689–P750. Residues N624, N740, and N767 are each glycosylated (N-linked (GlcNAc...) asparagine). The Peptidase S1 domain maps to I763 to I1019. C794 and C810 form a disulfide bridge. Residues H809 and D865 each act as charge relay system in the active site. The N-linked (GlcNAc...) asparagine glycan is linked to N912. The cysteines at positions 932 and 951 are disulfide-linked. Residue D960 coordinates substrate. An intrachain disulfide couples C962 to C996. S966 functions as the Charge relay system in the catalytic mechanism.

This sequence belongs to the peptidase S1 family. In terms of assembly, heterodimer of a light chain and a heavy chain linked by a disulfide bond. Forms a covalent heterodimer with intracellular coagulation inhibitor 1/LICI-1. Forms a covalent heterodimer with intracellular coagulation inhibitor 2/LICI-2. Post-translationally, N-glycosylated. In terms of processing, lipopolysaccharide (LPS) activates clotting factor C by inducing the proteolytic cleavage of the clotting factor C light chain into clotting factor C chains A and B. Clotting factor C chains heavy, A and B remain associated via interchain disulfide bonds. In terms of tissue distribution, expressed in hemocytes (at protein level).

It localises to the secreted. It carries out the reaction Selective cleavage of 103-Arg-|-Ser-104 and 124-Ile-|-Ile-125 bonds in Limulus clotting factor B to form activated factor B. Cleavage of -Pro-Arg-|-Xaa- bonds in synthetic substrates.. Activated by Gram-negative bacterial lipopolysaccharides. Inhibited by intracellular coagulation inhibitor 1/LICI-1 and to a lesser extent by intracellular coagulation inhibitors 2/LICI-2 and 3/LICI-3. Inhibited by the small molecule diisopropyl fluorophosphate (DFP). Functionally, this enzyme is closely associated with an endotoxin-sensitive hemolymph coagulation system which may play important roles in both hemostasis and host defense mechanisms. Its active form catalyzes the activation of clotting factor B. This Tachypleus tridentatus (Japanese horseshoe crab) protein is Clotting factor C.